We begin with the raw amino-acid sequence, 568 residues long: 2-succinyl-5-enolpyruvyl-6-hydroxy-3-cyclohexene-1-carboxylate synthase (568 aa).

The protein belongs to the TPP enzyme family. MenD subfamily. As to quaternary structure, homodimer. The cofactor is Mg(2+). Requires Mn(2+) as cofactor. Thiamine diphosphate serves as cofactor.

It carries out the reaction isochorismate + 2-oxoglutarate + H(+) = 5-enolpyruvoyl-6-hydroxy-2-succinyl-cyclohex-3-ene-1-carboxylate + CO2. The protein operates within quinol/quinone metabolism; 1,4-dihydroxy-2-naphthoate biosynthesis; 1,4-dihydroxy-2-naphthoate from chorismate: step 2/7. It participates in cofactor biosynthesis; phylloquinone biosynthesis. In terms of biological role, catalyzes the thiamine diphosphate-dependent decarboxylation of 2-oxoglutarate and the subsequent addition of the resulting succinic semialdehyde-thiamine pyrophosphate anion to isochorismate to yield 2-succinyl-5-enolpyruvyl-6-hydroxy-3-cyclohexene-1-carboxylate (SEPHCHC). This chain is 2-succinyl-5-enolpyruvyl-6-hydroxy-3-cyclohexene-1-carboxylate synthase, found in Synechococcus sp. (strain CC9902).